Consider the following 131-residue polypeptide: Small ribosomal subunit protein uS8 (131 aa).

The protein belongs to the universal ribosomal protein uS8 family. As to quaternary structure, part of the 30S ribosomal subunit. Contacts proteins S5 and S12.

One of the primary rRNA binding proteins, it binds directly to 16S rRNA central domain where it helps coordinate assembly of the platform of the 30S subunit. The chain is Small ribosomal subunit protein uS8 from Parabacteroides distasonis (strain ATCC 8503 / DSM 20701 / CIP 104284 / JCM 5825 / NCTC 11152).